Reading from the N-terminus, the 551-residue chain is Lysine--tRNA ligase (551 aa).

The short motif at Pro-54–Thr-62 is the 'HIGH' region element. The 'KMSKS' region motif lies at Lys-303–Ser-307. Lys-306 serves as a coordination point for ATP.

This sequence belongs to the class-I aminoacyl-tRNA synthetase family.

It localises to the cytoplasm. The catalysed reaction is tRNA(Lys) + L-lysine + ATP = L-lysyl-tRNA(Lys) + AMP + diphosphate. The sequence is that of Lysine--tRNA ligase from Brucella melitensis biotype 1 (strain ATCC 23456 / CCUG 17765 / NCTC 10094 / 16M).